The sequence spans 784 residues: E3 UFM1-protein ligase 1 homolog (784 aa).

Residues 401-481 (QKGNSSAQDL…GGGGGGNKKT (81 aa)) are disordered.

This sequence belongs to the UFL1 family.

E3 UFM1-protein ligase that mediates ufmylation of target proteins. The chain is E3 UFM1-protein ligase 1 homolog from Drosophila ananassae (Fruit fly).